Here is a 316-residue protein sequence, read N- to C-terminus: Acetaldehyde dehydrogenase (316 aa).

NAD(+) is bound at residue 11–14 (SGNI). The active-site Acyl-thioester intermediate is the C131. Residues 162 to 170 (SAGPGTRAN) and N289 contribute to the NAD(+) site.

It belongs to the acetaldehyde dehydrogenase family. Interacts with MhpE.

The catalysed reaction is acetaldehyde + NAD(+) + CoA = acetyl-CoA + NADH + H(+). It participates in aromatic compound metabolism; 3-phenylpropanoate degradation. Functionally, catalyzes the conversion of acetaldehyde to acetyl-CoA, using NAD(+) and coenzyme A. Is the final enzyme in the meta-cleavage pathway for the degradation of aromatic compounds. This is Acetaldehyde dehydrogenase from Shigella sonnei (strain Ss046).